An 86-amino-acid chain; its full sequence is MSINIQEIIKEYQSKIGDTGSTNVQVALLTARIRHLTKHFKTHKKDHHSRRGLLHLVSQRKKLLTYLRGNNKTAYSKLISHLELRK.

It belongs to the universal ribosomal protein uS15 family. As to quaternary structure, part of the 30S ribosomal subunit. Forms a bridge to the 50S subunit in the 70S ribosome, contacting the 23S rRNA.

Functionally, one of the primary rRNA binding proteins, it binds directly to 16S rRNA where it helps nucleate assembly of the platform of the 30S subunit by binding and bridging several RNA helices of the 16S rRNA. Its function is as follows. Forms an intersubunit bridge (bridge B4) with the 23S rRNA of the 50S subunit in the ribosome. In Vesicomyosocius okutanii subsp. Calyptogena okutanii (strain HA), this protein is Small ribosomal subunit protein uS15.